The chain runs to 146 residues: Ribosome-binding factor A (146 aa).

Residues 127-146 are disordered; the sequence is EFAGEADPYKKPEDDEAAES.

Belongs to the RbfA family. Monomer. Binds 30S ribosomal subunits, but not 50S ribosomal subunits or 70S ribosomes.

The protein resides in the cytoplasm. Functionally, one of several proteins that assist in the late maturation steps of the functional core of the 30S ribosomal subunit. Associates with free 30S ribosomal subunits (but not with 30S subunits that are part of 70S ribosomes or polysomes). Required for efficient processing of 16S rRNA. May interact with the 5'-terminal helix region of 16S rRNA. The sequence is that of Ribosome-binding factor A from Renibacterium salmoninarum (strain ATCC 33209 / DSM 20767 / JCM 11484 / NBRC 15589 / NCIMB 2235).